Consider the following 298-residue polypeptide: Cobalt-precorrin-5B C(1)-methyltransferase (298 aa).

This sequence belongs to the CbiD family.

The catalysed reaction is Co-precorrin-5B + S-adenosyl-L-methionine = Co-precorrin-6A + S-adenosyl-L-homocysteine. It participates in cofactor biosynthesis; adenosylcobalamin biosynthesis; cob(II)yrinate a,c-diamide from sirohydrochlorin (anaerobic route): step 6/10. Functionally, catalyzes the methylation of C-1 in cobalt-precorrin-5B to form cobalt-precorrin-6A. This Archaeoglobus fulgidus (strain ATCC 49558 / DSM 4304 / JCM 9628 / NBRC 100126 / VC-16) protein is Cobalt-precorrin-5B C(1)-methyltransferase.